Here is a 146-residue protein sequence, read N- to C-terminus: CysO-cysteine peptidase (146 aa).

One can recognise an MPN domain in the interval 11–134 (LVIRADLVNA…LRSYRIVDGA (124 aa)). Zn(2+) is bound by residues His88, His90, and Asp101. Positions 88–101 (HSHTATEAYPSRTD) match the JAMM motif motif.

It belongs to the peptidase M67A family. The cofactor is Zn(2+).

The catalysed reaction is [CysO sulfur-carrier protein]-Gly-NH-CH2-C(O)-S-L-Cys + H2O = [CysO sulfur-carrier protein]-C-terminal Gly-Gly + L-cysteine + H(+). It functions in the pathway amino-acid biosynthesis; L-cysteine biosynthesis. Functionally, protease that hydrolyzes the covalent CysO-cysteine adduct synthesized by CysM to release L-cysteine and regenerate CysO. The protein is CysO-cysteine peptidase (mec) of Mycobacterium bovis (strain ATCC BAA-935 / AF2122/97).